A 207-amino-acid chain; its full sequence is 3,4-dihydroxy-2-butanone 4-phosphate synthase (207 aa).

Residues 28–29 (RE), aspartate 33, 140–144 (RRGHT), and glutamate 164 each bind D-ribulose 5-phosphate. Glutamate 29 contacts Mg(2+). Histidine 143 contacts Mg(2+).

This sequence belongs to the DHBP synthase family. As to quaternary structure, homodimer. Mg(2+) serves as cofactor. The cofactor is Mn(2+).

The catalysed reaction is D-ribulose 5-phosphate = (2S)-2-hydroxy-3-oxobutyl phosphate + formate + H(+). The protein operates within cofactor biosynthesis; riboflavin biosynthesis; 2-hydroxy-3-oxobutyl phosphate from D-ribulose 5-phosphate: step 1/1. Functionally, catalyzes the conversion of D-ribulose 5-phosphate to formate and 3,4-dihydroxy-2-butanone 4-phosphate. This is 3,4-dihydroxy-2-butanone 4-phosphate synthase from Oceanobacillus iheyensis (strain DSM 14371 / CIP 107618 / JCM 11309 / KCTC 3954 / HTE831).